The chain runs to 216 residues: Maleylacetoacetate isomerase (216 aa).

Met1 carries the N-acetylmethionine modification. Positions 4 to 87 constitute a GST N-terminal domain; that stretch reads GKPVLYSYFR…YLEETRPIPR (84 aa). Glutathione-binding positions include 14–19 and Gln45; that span reads SSCSWR. Lys57 carries the N6-succinyllysine modification. Residues Val59, 71-72, Gln111, and 115-117 contribute to the glutathione site; these read QS and NLS. A GST C-terminal domain is found at 92–212; that stretch reads DPQKRAIVRM…HPCRQPDTPA (121 aa). Thr136 carries the post-translational modification Phosphothreonine. Residue Ser137 is modified to Phosphoserine. Residue Lys177 is modified to N6-succinyllysine. Residue Ser181 is modified to Phosphoserine.

It belongs to the GST superfamily. Zeta family. In terms of assembly, homodimer. Requires glutathione as cofactor. Post-translationally, the N-terminus is blocked.

It is found in the cytoplasm. The catalysed reaction is 4-maleylacetoacetate = 4-fumarylacetoacetate. It catalyses the reaction RX + glutathione = an S-substituted glutathione + a halide anion + H(+). The protein operates within amino-acid degradation; L-phenylalanine degradation; acetoacetate and fumarate from L-phenylalanine: step 5/6. In terms of biological role, probable bifunctional enzyme showing minimal glutathione-conjugating activity with ethacrynic acid and 7-chloro-4-nitrobenz-2-oxa-1, 3-diazole and maleylacetoacetate isomerase activity. Also has low glutathione peroxidase activity with t-butyl and cumene hydroperoxides. Is able to catalyze the glutathione dependent oxygenation of dichloroacetic acid to glyoxylic acid. This is Maleylacetoacetate isomerase (Gstz1) from Rattus norvegicus (Rat).